Consider the following 23-residue polypeptide: Coenzyme PQQ synthesis protein A (23 aa).

A cross-link (pyrroloquinoline quinone (Glu-Tyr)) is located at residues 15 to 19 (EVTLY).

The protein belongs to the PqqA family.

Its pathway is cofactor biosynthesis; pyrroloquinoline quinone biosynthesis. In terms of biological role, required for coenzyme pyrroloquinoline quinone (PQQ) biosynthesis. PQQ is probably formed by cross-linking a specific glutamate to a specific tyrosine residue and excising these residues from the peptide. The sequence is that of Coenzyme PQQ synthesis protein A from Klebsiella pneumoniae (strain 342).